The sequence spans 57 residues: Major exported protein (57 aa).

The protein belongs to the hcp1 family. As to quaternary structure, homodimer.

It localises to the secreted. The polypeptide is Major exported protein (Pseudomonas syringae pv. ribicola).